A 376-amino-acid chain; its full sequence is Chaperone protein DnaJ (376 aa).

One can recognise a J domain in the interval 5–70 (DFYEVLGVGR…DKKAAYDQFG (66 aa)). Residues 132–210 (GLSKELRIPT…CHGEGRVEKS (79 aa)) form a CR-type zinc finger. The Zn(2+) site is built by Cys145, Cys148, Cys162, Cys165, Cys184, Cys187, Cys198, and Cys201. CXXCXGXG motif repeat units lie at residues 145-152 (CEPCDGSG), 162-169 (CGTCHGQG), 184-191 (CPTCHGRG), and 198-205 (CNKCHGEG).

This sequence belongs to the DnaJ family. Homodimer. The cofactor is Zn(2+).

Its subcellular location is the cytoplasm. Participates actively in the response to hyperosmotic and heat shock by preventing the aggregation of stress-denatured proteins and by disaggregating proteins, also in an autonomous, DnaK-independent fashion. Unfolded proteins bind initially to DnaJ; upon interaction with the DnaJ-bound protein, DnaK hydrolyzes its bound ATP, resulting in the formation of a stable complex. GrpE releases ADP from DnaK; ATP binding to DnaK triggers the release of the substrate protein, thus completing the reaction cycle. Several rounds of ATP-dependent interactions between DnaJ, DnaK and GrpE are required for fully efficient folding. Also involved, together with DnaK and GrpE, in the DNA replication of plasmids through activation of initiation proteins. This chain is Chaperone protein DnaJ, found in Shewanella piezotolerans (strain WP3 / JCM 13877).